The chain runs to 3131 residues: Intermembrane lipid transfer protein vps1302 (3131 aa).

One can recognise a Chorein N-terminal domain in the interval 2–115; that stretch reads LEGLLANFLN…VLESKRRQMQ (114 aa). The segment covering 774–801 has biased composition (basic and acidic residues); it reads DGKASDDDDNGDWRPESSESLDSHESEY. The tract at residues 774-807 is disordered; the sequence is DGKASDDDDNGDWRPESSESLDSHESEYKLNNTP. The 279-residue stretch at 2085 to 2363 folds into the SHR-BD domain; that stretch reads KVMIYPPYVI…NYSWDFPILK (279 aa).

This sequence belongs to the VPS13 family.

Its subcellular location is the golgi apparatus. The protein localises to the trans-Golgi network. Mediates the transfer of lipids between membranes at organelle contact sites. May play a role in mitochondrial lipid homeostasis, Golgi vesicle transport, reticulophagy, actin cytoskeleton organization and formation of the forespore membrane. The sequence is that of Intermembrane lipid transfer protein vps1302 from Schizosaccharomyces pombe (strain 972 / ATCC 24843) (Fission yeast).